A 484-amino-acid chain; its full sequence is Aldehyde dehydrogenase family 3 member F1 (484 aa).

192–197 (GSPKIG) is a binding site for NAD(+). Residue Glu214 is the Proton acceptor of the active site. The Nucleophile role is filled by Cys252.

Belongs to the aldehyde dehydrogenase family. As to quaternary structure, homotetramer. In terms of tissue distribution, constituively expressed at low levels.

It carries out the reaction an aldehyde + NAD(+) + H2O = a carboxylate + NADH + 2 H(+). This Arabidopsis thaliana (Mouse-ear cress) protein is Aldehyde dehydrogenase family 3 member F1 (ALDH3F1).